A 647-amino-acid polypeptide reads, in one-letter code: MEDPEGTEGEREGCTGWFEVEAIIEKQTGDNISEDEDENAYDSGTDLIDFIDDSNINNEQAEHEAARALFNAQEGEDDLHAVSAVKRKFTSSPESAGQDGVEKHGSPRAKHICVNTECVLPKRKPCHVEDSGYGNSEVEAQQMADQVDGQNGDWQSNSSQSSGVGASNSDVSCTSIEDNEENSNRTLKSIQNIMCENSIKTTVLFKFKETYGVSFMELVRPFKSNRSSCTDWCIIGMGVTPSVAEGLKVLIQPYSIYAHLQCLTCDRGVLILLLIRFKCGKNRLTVSKLMSQLLNIPETHMVIEPPKLRSATCALYWYRTGLSNISEVYGTTPEWIEQQTVLQHSFDNSIFDFGEMVQWAYDHDITDDSDIAYKYAQLADVNSNAAAFLKSNSQAKIVKDCATMCRHYKRAERKHMNIGQWIQYRCDRIDDGGDWRPIVRFLRYQDIEFTAFLDAFKKFLKGIPKKNCLVLYGPANTGKSYFGMSLIRFLSGCVISYVNSKSHFWLQPLTDAKVGMIDDVTPICWTYIDDYMRNALDGNDISVDVKHRALVQIKCPPLILTTNTNAGTDPRWPYLHSRLVVFHFKNPFPFDENGNPIYEINNENWKSFFSRTWCKLDLIQEEDKENDGVDTGTFKCSAGKNTRSIRS.

The short motif at 86 to 88 is the Nuclear localization signal element; it reads KRK. Disordered regions lie at residues 88–107 and 146–178; these read KFTS…HGSP and QVDG…SIED. Phosphoserine; by host is present on residues Ser-92 and Ser-106. Low complexity predominate over residues 149–169; that stretch reads GQNGDWQSNSSQSSGVGASNS. The DNA-binding region stretch occupies residues 182 to 348; it reads NSNRTLKSIQ…QTVLQHSFDN (167 aa). Residues 447-597 form the SF3 helicase domain; it reads IEFTAFLDAF…FPFDENGNPI (151 aa). 473–480 is an ATP binding site; sequence GPANTGKS. Lys-554 participates in a covalent cross-link: Glycyl lysine isopeptide (Lys-Gly) (interchain with G-Cter in SUMO).

It belongs to the papillomaviridae E1 protein family. Can form hexamers. Interacts with E2 protein; this interaction increases E1 DNA binding specificity. Interacts with host DNA polymerase subunit POLA2. Interacts with host single stranded DNA-binding protein RPA1. Interacts with host TOP1; this interaction stimulates the enzymatic activity of TOP1. Phosphorylated. Post-translationally, sumoylated.

It is found in the host nucleus. It catalyses the reaction Couples ATP hydrolysis with the unwinding of duplex DNA by translocating in the 3'-5' direction.. The catalysed reaction is ATP + H2O = ADP + phosphate + H(+). ATP-dependent DNA 3'-5' helicase required for initiation of viral DNA replication. It forms a complex with the viral E2 protein. The E1-E2 complex binds to the replication origin which contains binding sites for both proteins. During the initial step, a dimer of E1 interacts with a dimer of protein E2 leading to a complex that binds the viral origin of replication with high specificity. Then, a second dimer of E1 displaces the E2 dimer in an ATP-dependent manner to form the E1 tetramer. Following this, two E1 monomers are added to each half of the site, which results in the formation of two E1 trimers on the viral ori. Subsequently, two hexamers will be created. The double hexamer acts as a bi-directional helicase machinery and unwinds the viral DNA and then recruits the host DNA polymerase to start replication. The protein is Replication protein E1 of Homo sapiens (Human).